Consider the following 222-residue polypeptide: METTNKANTMMAELKTLCNKDNIVLSLSQYEKLVGYALLLEDWNNKINLISRKEDAPILIKHVFHSLLIGLFHQFSSSEKVLDLGTGGGLPGIPLAIAWPDTQFLLVDATGKKIAACQSMIKSLDIKNAVAVHSRVEELKGMSFDTVLSRQVAQLEQLCSYASKILKPGGRLICLKGGNLDHEIKKALAGKKEKGSFPSVVEQFPVSGYSPCFTEKHIVIAR.

S-adenosyl-L-methionine contacts are provided by residues Gly-85, Leu-90, 108–110 (DAT), 136–137 (VE), and Arg-150.

This sequence belongs to the methyltransferase superfamily. RNA methyltransferase RsmG family.

It localises to the cytoplasm. Specifically methylates the N7 position of a guanine in 16S rRNA. The sequence is that of Ribosomal RNA small subunit methyltransferase G from Chlorobium phaeobacteroides (strain DSM 266 / SMG 266 / 2430).